A 216-amino-acid chain; its full sequence is Guanylate kinase (216 aa).

A Guanylate kinase-like domain is found at 12-191 (GLLFVISSPS…CVKQVKNILT (180 aa)). 19 to 26 (SPSGAGKS) is a binding site for ATP.

This sequence belongs to the guanylate kinase family.

It is found in the cytoplasm. It carries out the reaction GMP + ATP = GDP + ADP. Its function is as follows. Essential for recycling GMP and indirectly, cGMP. This Zymomonas mobilis subsp. mobilis (strain ATCC 31821 / ZM4 / CP4) protein is Guanylate kinase.